A 92-amino-acid polypeptide reads, in one-letter code: uncharacterized protein (92 aa).

It to M.jannaschii MJ0782.1.

This is an uncharacterized protein from Methanothermobacter thermautotrophicus (strain ATCC 29096 / DSM 1053 / JCM 10044 / NBRC 100330 / Delta H) (Methanobacterium thermoautotrophicum).